Reading from the N-terminus, the 572-residue chain is Arginine--tRNA ligase (572 aa).

Positions 121–131 match the 'HIGH' region motif; the sequence is PNLAKEMHVGH.

This sequence belongs to the class-I aminoacyl-tRNA synthetase family. Monomer.

The protein localises to the cytoplasm. The enzyme catalyses tRNA(Arg) + L-arginine + ATP = L-arginyl-tRNA(Arg) + AMP + diphosphate. The sequence is that of Arginine--tRNA ligase from Chromobacterium violaceum (strain ATCC 12472 / DSM 30191 / JCM 1249 / CCUG 213 / NBRC 12614 / NCIMB 9131 / NCTC 9757 / MK).